Here is a 100-residue protein sequence, read N- to C-terminus: Large ribosomal subunit protein uL23 (100 aa).

This sequence belongs to the universal ribosomal protein uL23 family. Part of the 50S ribosomal subunit. Contacts protein L29, and trigger factor when it is bound to the ribosome.

Its function is as follows. One of the early assembly proteins it binds 23S rRNA. One of the proteins that surrounds the polypeptide exit tunnel on the outside of the ribosome. Forms the main docking site for trigger factor binding to the ribosome. The sequence is that of Large ribosomal subunit protein uL23 from Pseudoalteromonas atlantica (strain T6c / ATCC BAA-1087).